The sequence spans 207 residues: Proteasome subunit beta (207 aa).

Positions 1-9 (MSNKNTFEG) are cleaved as a propeptide — removed in mature form; by autocatalysis. The active-site Nucleophile is the Thr10.

Belongs to the peptidase T1B family. In terms of assembly, the 20S proteasome core is composed of 14 alpha and 14 beta subunits that assemble into four stacked heptameric rings, resulting in a barrel-shaped structure. The two inner rings, each composed of seven catalytic beta subunits, are sandwiched by two outer rings, each composed of seven alpha subunits. The catalytic chamber with the active sites is on the inside of the barrel. Has a gated structure, the ends of the cylinder being occluded by the N-termini of the alpha-subunits. Is capped at one or both ends by the proteasome regulatory ATPase, PAN.

Its subcellular location is the cytoplasm. The enzyme catalyses Cleavage of peptide bonds with very broad specificity.. With respect to regulation, the formation of the proteasomal ATPase PAN-20S proteasome complex, via the docking of the C-termini of PAN into the intersubunit pockets in the alpha-rings, triggers opening of the gate for substrate entry. Interconversion between the open-gate and close-gate conformations leads to a dynamic regulation of the 20S proteasome proteolysis activity. Functionally, component of the proteasome core, a large protease complex with broad specificity involved in protein degradation. The polypeptide is Proteasome subunit beta (Methanobrevibacter ruminantium (strain ATCC 35063 / DSM 1093 / JCM 13430 / OCM 146 / M1) (Methanobacterium ruminantium)).